A 351-amino-acid chain; its full sequence is Transmembrane protein DDB_G0272716 (351 aa).

N4 and N59 each carry an N-linked (GlcNAc...) asparagine glycan. 2 consecutive transmembrane segments (helical) span residues 175–195 (FSSL…TAIG) and 215–235 (VVAP…GAFI). Residue N345 is glycosylated (N-linked (GlcNAc...) asparagine).

The protein localises to the membrane. The protein is Transmembrane protein DDB_G0272716 of Dictyostelium discoideum (Social amoeba).